Consider the following 399-residue polypeptide: Acetate kinase (399 aa).

Asparagine 10 serves as a coordination point for Mg(2+). Lysine 17 provides a ligand contact to ATP. Arginine 91 contacts substrate. Aspartate 148 (proton donor/acceptor) is an active-site residue. Residues 208-212 (HLGNG), 283-285 (DCR), and 331-335 (GIGEN) each bind ATP. Glutamate 385 lines the Mg(2+) pocket.

Belongs to the acetokinase family. In terms of assembly, homodimer. It depends on Mg(2+) as a cofactor. Requires Mn(2+) as cofactor.

Its subcellular location is the cytoplasm. It carries out the reaction acetate + ATP = acetyl phosphate + ADP. It functions in the pathway metabolic intermediate biosynthesis; acetyl-CoA biosynthesis; acetyl-CoA from acetate: step 1/2. Catalyzes the formation of acetyl phosphate from acetate and ATP. Can also catalyze the reverse reaction. In Shewanella sp. (strain ANA-3), this protein is Acetate kinase.